The sequence spans 99 residues: C-C motif chemokine 17 (99 aa).

Positions 1–23 (MMSLKLLLLVMLLLGASLQVTHA) are cleaved as a signal peptide. Cystine bridges form between Cys33–Cys57 and Cys34–Cys73.

It belongs to the intercrine beta (chemokine CC) family. Expressed in thymus and also in spleen, lung, lymph node, kidney, small intestine, colon and skin.

The protein resides in the secreted. Its function is as follows. Chemokine, which displays chemotactic activity for T lymphocytes, preferentially Th2 cells, but not monocytes or granulocytes. Therefore plays an important role in a wide range of inflammatory and immunological processes. Acts by binding to CCR4 at T-cell surface. Mediates GM-CSF/CSF2-driven pain and inflammation. In the brain, required to maintain the typical, highly branched morphology of hippocampal microglia under homeostatic conditions. May be important for the appropriate adaptation of microglial morphology and synaptic plasticity to acute lipopolysaccharide (LPS)-induced neuroinflammation. Plays a role in wound healing, mainly by inducing fibroblast migration into the wound. In Felis catus (Cat), this protein is C-C motif chemokine 17 (CCL17).